Reading from the N-terminus, the 108-residue chain is Probable chaperone-like protein YdbL (108 aa).

Positions 1 to 21 are cleaved as a signal peptide; that stretch reads MKKTLLLCAFLVGLVSSNVMA.

The protein localises to the periplasm. Its function is as follows. Probably acts as a chaperone-like protein that contributes to, but is not required for, the formation of the YdbH-YnbE intermembrane bridge. Affects the function and the structure of the YdbH-YnbE complex. Overexpression of ydbL causes a negative effect on YdbH-YnbE function. The polypeptide is Probable chaperone-like protein YdbL (ydbL) (Escherichia coli (strain K12)).